Here is a 578-residue protein sequence, read N- to C-terminus: Probable multidrug ABC transporter ATP-binding protein YbhF (578 aa).

ABC transporter domains lie at 6–237 (ITLN…LMTS) and 330–559 (IEAK…PDPT). ATP contacts are provided by residues 40-47 (GPDGAGKT) and 362-369 (GPNGAGKS).

It belongs to the ABC transporter superfamily. The complex is probably composed of two ATP-binding proteins (YbhF) and two transmembrane proteins (YbhR and YbhS).

Its function is as follows. Part of the ABC transporter complex YbhFSR that could be involved in efflux of cefoperazone. Probably responsible for energy coupling to the transport system. This chain is Probable multidrug ABC transporter ATP-binding protein YbhF (ybhF), found in Escherichia coli (strain K12).